Consider the following 570-residue polypeptide: Proline--tRNA ligase (570 aa).

This sequence belongs to the class-II aminoacyl-tRNA synthetase family. ProS type 1 subfamily. As to quaternary structure, homodimer.

It is found in the cytoplasm. It catalyses the reaction tRNA(Pro) + L-proline + ATP = L-prolyl-tRNA(Pro) + AMP + diphosphate. Functionally, catalyzes the attachment of proline to tRNA(Pro) in a two-step reaction: proline is first activated by ATP to form Pro-AMP and then transferred to the acceptor end of tRNA(Pro). As ProRS can inadvertently accommodate and process non-cognate amino acids such as alanine and cysteine, to avoid such errors it has two additional distinct editing activities against alanine. One activity is designated as 'pretransfer' editing and involves the tRNA(Pro)-independent hydrolysis of activated Ala-AMP. The other activity is designated 'posttransfer' editing and involves deacylation of mischarged Ala-tRNA(Pro). The misacylated Cys-tRNA(Pro) is not edited by ProRS. The sequence is that of Proline--tRNA ligase from Clostridium beijerinckii (strain ATCC 51743 / NCIMB 8052) (Clostridium acetobutylicum).